The sequence spans 230 residues: Claudin-2 (230 aa).

The Cytoplasmic segment spans residues Met1 to Gln7. Residues Leu8–Pro28 form a helical membrane-spanning segment. The Extracellular segment spans residues Ser29–Gln81. An intrachain disulfide couples Cys54 to Cys64. A helical transmembrane segment spans residues Ala82–Met102. The Cytoplasmic segment spans residues Arg103–Arg116. The helical transmembrane segment at Val117–Ala137 threads the bilayer. At Trp138 to Glu162 the chain is on the extracellular side. A helical membrane pass occupies residues Ala163 to Phe183. At Ser184 to Val230 the chain is on the cytoplasmic side. The segment at Thr205 to Val230 is disordered. Lys218 is covalently cross-linked (Glycyl lysine isopeptide (Lys-Gly) (interchain with G-Cter in SUMO)). 2 positions are modified to phosphoserine: Ser219 and Ser223. Residues Glu220–Val230 are compositionally biased toward polar residues. An interaction with TJP1, TJP2 and TJP3 region spans residues Tyr229–Val230.

The protein belongs to the claudin family. Can form homo- and heteropolymers with other claudins to mediate paracellular barrier and channel functions of tight junctions in response to physiological stimuli. Homopolymers interact with CLDN3, but not CLDN1, homopolymers. Directly interacts with TJP1/ZO-1, TJP2/ZO-2 and TJP3/ZO-3. In terms of processing, the disulfide bond is necessary for pore formation, but is not required for correct protein trafficking.

The protein resides in the cell junction. The protein localises to the tight junction. Its subcellular location is the cell membrane. The enzyme catalyses Na(+)(in) = Na(+)(out). The catalysed reaction is K(+)(in) = K(+)(out). It carries out the reaction Rb(+)(in) = Rb(+)(out). It catalyses the reaction Li(+)(in) = Li(+)(out). The enzyme catalyses Cs(+)(in) = Cs(+)(out). The catalysed reaction is Ca(2+)(in) = Ca(2+)(out). It carries out the reaction methylamine(out) = methylamine(in). It catalyses the reaction choline(out) = choline(in). The enzyme catalyses H2O(in) = H2O(out). Forms paracellular channels: polymerizes in tight junction strands with cation- and water-selective channels through the strands, conveying epithelial permeability in a process known as paracellular tight junction permeability. In intestinal epithelium, allows for sodium and water fluxes from the peritoneal side to the lumen of the intestine to regulate nutrient absorption and clear enteric pathogens as part of mucosal immune response. In kidney, allows passive sodium and calcium reabsorption across proximal tubules from the lumen back to the bloodstream. In the hepatobiliary tract, allows paracellular water and cation fluxes in the hepatic perivenous areas and biliary epithelium to generate bile flow and maintain osmotic gradients. This is Claudin-2 (CLDN2) from Bos taurus (Bovine).